The following is a 314-amino-acid chain: Porphobilinogen deaminase (314 aa).

Residue Cys-241 is modified to S-(dipyrrolylmethanemethyl)cysteine.

It belongs to the HMBS family. In terms of assembly, monomer. It depends on dipyrromethane as a cofactor.

It carries out the reaction 4 porphobilinogen + H2O = hydroxymethylbilane + 4 NH4(+). It participates in porphyrin-containing compound metabolism; protoporphyrin-IX biosynthesis; coproporphyrinogen-III from 5-aminolevulinate: step 2/4. It functions in the pathway porphyrin-containing compound metabolism; chlorophyll biosynthesis. In terms of biological role, tetrapolymerization of the monopyrrole PBG into the hydroxymethylbilane pre-uroporphyrinogen in several discrete steps. This is Porphobilinogen deaminase from Chloroherpeton thalassium (strain ATCC 35110 / GB-78).